The following is a 228-amino-acid chain: Dolichyl-phosphate hexose transferase HVO_1613 (228 aa).

This sequence belongs to the glycosyltransferase 2 family.

Functionally, glycosyltransferase that adds a monosaccharide to dolichol phosphate, thereby being responsible for generating one of the three monosaccharide-modified dolichol phosphates. The subunit onto which additional sugars are added is not known. The chain is Dolichyl-phosphate hexose transferase HVO_1613 from Haloferax volcanii (strain ATCC 29605 / DSM 3757 / JCM 8879 / NBRC 14742 / NCIMB 2012 / VKM B-1768 / DS2) (Halobacterium volcanii).